Consider the following 122-residue polypeptide: Large ribosomal subunit protein uL14 (122 aa).

The protein belongs to the universal ribosomal protein uL14 family. Part of the 50S ribosomal subunit. Forms a cluster with proteins L3 and L19. In the 70S ribosome, L14 and L19 interact and together make contacts with the 16S rRNA in bridges B5 and B8.

Its function is as follows. Binds to 23S rRNA. Forms part of two intersubunit bridges in the 70S ribosome. This chain is Large ribosomal subunit protein uL14, found in Jannaschia sp. (strain CCS1).